A 254-amino-acid chain; its full sequence is Putative epimerase LsrE (254 aa).

Residues 14–34 form a helical membrane-spanning segment; that stretch reads VALLASYPLSVGILAGQWIAL. The a divalent metal cation site is built by H50, D52, and H81. The Proton acceptor role is filled by D52. Substrate contacts are provided by residues H81, 166–169, 199–201, and 221–222; these read GYGS, DGS, and GS. D199 contacts a divalent metal cation. D199 serves as the catalytic Proton donor.

It belongs to the ribulose-phosphate 3-epimerase family. It depends on a divalent metal cation as a cofactor.

Its subcellular location is the cell membrane. The polypeptide is Putative epimerase LsrE (lsrE) (Salmonella typhi).